A 479-amino-acid chain; its full sequence is Probable glycine dehydrogenase (decarboxylating) subunit 2 (479 aa).

Residue lysine 265 is modified to N6-(pyridoxal phosphate)lysine.

Belongs to the GcvP family. C-terminal subunit subfamily. As to quaternary structure, the glycine cleavage system is composed of four proteins: P, T, L and H. In this organism, the P 'protein' is a heterodimer of two subunits. It depends on pyridoxal 5'-phosphate as a cofactor.

It carries out the reaction N(6)-[(R)-lipoyl]-L-lysyl-[glycine-cleavage complex H protein] + glycine + H(+) = N(6)-[(R)-S(8)-aminomethyldihydrolipoyl]-L-lysyl-[glycine-cleavage complex H protein] + CO2. In terms of biological role, the glycine cleavage system catalyzes the degradation of glycine. The P protein binds the alpha-amino group of glycine through its pyridoxal phosphate cofactor; CO(2) is released and the remaining methylamine moiety is then transferred to the lipoamide cofactor of the H protein. This chain is Probable glycine dehydrogenase (decarboxylating) subunit 2, found in Pseudothermotoga lettingae (strain ATCC BAA-301 / DSM 14385 / NBRC 107922 / TMO) (Thermotoga lettingae).